Here is a 448-residue protein sequence, read N- to C-terminus: Signal recognition particle protein (448 aa).

GTP is bound by residues 101-108 (GLQGSGKT), 182-186 (DSAGR), and 240-243 (SKFD).

This sequence belongs to the GTP-binding SRP family. SRP54 subfamily. In terms of assembly, part of the signal recognition particle protein translocation system, which is composed of SRP and FtsY. SRP is a ribonucleoprotein composed of Ffh and a 4.5S RNA molecule.

The protein localises to the cytoplasm. It carries out the reaction GTP + H2O = GDP + phosphate + H(+). Functionally, involved in targeting and insertion of nascent membrane proteins into the cytoplasmic membrane. Binds to the hydrophobic signal sequence of the ribosome-nascent chain (RNC) as it emerges from the ribosomes. The SRP-RNC complex is then targeted to the cytoplasmic membrane where it interacts with the SRP receptor FtsY. Interaction with FtsY leads to the transfer of the RNC complex to the Sec translocase for insertion into the membrane, the hydrolysis of GTP by both Ffh and FtsY, and the dissociation of the SRP-FtsY complex into the individual components. The polypeptide is Signal recognition particle protein (Helicobacter pylori (strain J99 / ATCC 700824) (Campylobacter pylori J99)).